A 421-amino-acid polypeptide reads, in one-letter code: Serine--tRNA ligase (421 aa).

231 to 233 (TAE) lines the L-serine pocket. 262–264 (RRE) is an ATP binding site. L-serine is bound at residue Glu285. 349–352 (EISS) is a binding site for ATP. Ser384 is a binding site for L-serine.

Belongs to the class-II aminoacyl-tRNA synthetase family. Type-1 seryl-tRNA synthetase subfamily. In terms of assembly, homodimer. The tRNA molecule binds across the dimer.

The protein resides in the cytoplasm. The enzyme catalyses tRNA(Ser) + L-serine + ATP = L-seryl-tRNA(Ser) + AMP + diphosphate + H(+). It catalyses the reaction tRNA(Sec) + L-serine + ATP = L-seryl-tRNA(Sec) + AMP + diphosphate + H(+). It participates in aminoacyl-tRNA biosynthesis; selenocysteinyl-tRNA(Sec) biosynthesis; L-seryl-tRNA(Sec) from L-serine and tRNA(Sec): step 1/1. Functionally, catalyzes the attachment of serine to tRNA(Ser). Is also able to aminoacylate tRNA(Sec) with serine, to form the misacylated tRNA L-seryl-tRNA(Sec), which will be further converted into selenocysteinyl-tRNA(Sec). The sequence is that of Serine--tRNA ligase from Hydrogenobaculum sp. (strain Y04AAS1).